The following is a 956-amino-acid chain: Matrilin-2 (956 aa).

The signal sequence occupies residues M1–G23. Positions D57–F232 constitute a VWFA 1 domain. Residue N221 is glycosylated (N-linked (GlcNAc...) asparagine). EGF-like domains are found at residues T238–R278, I279–T319, A320–S360, K361–R401, R402–S442, R443–S483, R484–A524, K525–R565, R566–R606, and R607–K647. 30 cysteine pairs are disulfide-bonded: C242–C253, C249–C262, C264–C277, C283–C294, C290–C303, C305–C318, C324–C335, C331–C344, C346–C359, C365–C376, C372–C385, C387–C400, C406–C417, C413–C426, C428–C441, C447–C458, C454–C467, C469–C482, C488–C499, C495–C508, C510–C523, C529–C540, C536–C549, C551–C564, C570–C581, C577–C590, C592–C605, C611–C622, C618–C631, and C633–C646. Residues D655–L830 enclose the VWFA 2 domain. N-linked (GlcNAc...) asparagine glycosylation occurs at N890. A coiled-coil region spans residues K917–Y955.

Detected in a variety of organs, including calvaria, uterus, heart and brain, as well as fibroblast and osteoblast cell lines.

The protein resides in the secreted. Its function is as follows. Involved in matrix assembly. In Mus musculus (Mouse), this protein is Matrilin-2 (Matn2).